The primary structure comprises 107 residues: uncharacterized protein (107 aa).

2 helical membrane passes run 14-34 and 68-88; these read YLAEFLLGLTALFGLYLIVAW and FFVFLGYVAHIIPFTAFLVPI.

Its subcellular location is the cell membrane. This is an uncharacterized protein from Haemophilus influenzae (strain ATCC 51907 / DSM 11121 / KW20 / Rd).